The following is a 487-amino-acid chain: Sodium-coupled neutral amino acid symporter 1 (487 aa).

The Cytoplasmic portion of the chain corresponds to 1-74 (MMHFKSGLEL…EYIPGTTSLG (74 aa)). The residue at position 6 (Ser6) is a Phosphoserine. At Thr11 the chain carries Phosphothreonine. Phosphoserine occurs at positions 25, 28, 49, and 52. The residue at position 54 (Thr54) is a Phosphothreonine. Ser56 is modified (phosphoserine). The helical transmembrane segment at 75–97 (MSVFNLSNAIMGSGILGLAFALA) threads the bilayer. Over 98–112 (NTGILLFLVLLTSVT) the chain is Extracellular. The helical transmembrane segment at 113-133 (LLSIYSINLLLICSKETGCMV) threads the bilayer. Over 134–147 (YEKLGEQVFGTTGK) the chain is Cytoplasmic. A helical membrane pass occupies residues 148-168 (FVIFGATSLQNTGAMLSYLFI). Residues 169–188 (VKNELPSAIKFLMGKEETFS) are Extracellular-facing. A helical membrane pass occupies residues 189-211 (AWYVDGRVLVVIVTFGIILPLCL). Over 212-216 (LKNLG) the chain is Cytoplasmic. Residues 217-237 (YLGYTSGFSLSCMVFFLIVVI) traverse the membrane as a helical segment. At 238-275 (YKKFQIPCIVPELNSTISANSTNADTCTPKYVTFNSKT) the chain is on the extracellular side. Residues Cys245 and Cys264 are joined by a disulfide bond. N-linked (GlcNAc...) asparagine glycans are attached at residues Asn251 and Asn257. A helical membrane pass occupies residues 276 to 296 (VYALPTIAFAFVCHPSVLPIY). Over 297-312 (SELKDRSQKKMQMVSN) the chain is Cytoplasmic. A helical membrane pass occupies residues 313-333 (ISFFAMFVMYFLTAIFGYLTF). Residues 334-350 (YDNVQSDLLHKYQSKDD) are Extracellular-facing. The helical transmembrane segment at 351–371 (ILILTVRLAVIVAVILTVPVL) threads the bilayer. Residues 372-393 (FFTVRSSLFELAKKTKFNLCRH) are Cytoplasmic-facing. Residues 394–414 (TVVTCILLVVINLLVIFIPSM) form a helical membrane-spanning segment. The Extracellular segment spans residues 415–416 (KD). A helical membrane pass occupies residues 417 to 437 (IFGVVGVTSANMLIFILPSSL). The Cytoplasmic portion of the chain corresponds to 438–452 (YLKITDQDGDKGTQR). The chain crosses the membrane as a helical span at residues 453–473 (IWAALFLGLGVLFSLVSIPLV). Residues 474–487 (IYDWACSSSSDEGH) lie on the Extracellular side of the membrane.

This sequence belongs to the amino acid/polyamine transporter 2 family. Post-translationally, N-glycosylation plays an important role in the L-glutamine transport. As to expression, expressed in the cerebral cortex by pyramidal and GABAergic neurons, astrocytes and other non-neuronal cells (at protein level). Expressed in placenta, heart, lung, skeletal muscle, spleen, stomach and testis. Highly expressed in cytotrophoblast cells from term placenta.

It localises to the cell membrane. It carries out the reaction L-glutamine(in) + Na(+)(in) = L-glutamine(out) + Na(+)(out). It catalyses the reaction L-alanine(in) + Na(+)(in) = L-alanine(out) + Na(+)(out). The enzyme catalyses L-asparagine(in) + Na(+)(in) = L-asparagine(out) + Na(+)(out). The catalysed reaction is L-histidine(in) + Na(+)(in) = L-histidine(out) + Na(+)(out). It carries out the reaction L-serine(in) + Na(+)(in) = L-serine(out) + Na(+)(out). It catalyses the reaction L-cysteine(in) + Na(+)(in) = L-cysteine(out) + Na(+)(out). The enzyme catalyses L-methionine(in) + Na(+)(in) = L-methionine(out) + Na(+)(out). The catalysed reaction is glycine(in) + Na(+)(in) = glycine(out) + Na(+)(out). It carries out the reaction L-threonine(in) + Na(+)(in) = L-threonine(out) + Na(+)(out). It catalyses the reaction L-proline(in) + Na(+)(in) = L-proline(out) + Na(+)(out). With respect to regulation, inhibited by alpha-(methylamino)isobutyric acid (MeAIB). Inhibited by lithium, potassium, choline ions, N-methylglucamine. The pH dependence has an allosteric effect on the transport. Symporter that cotransports short-chain neutral amino acids and sodium ions from the extraccellular to the intracellular side of the cell membrane. The transport is elctrogenic, pH dependent and driven by the Na(+) electrochemical gradient. Participates in the astroglia-derived glutamine transport into GABAergic interneurons for neurotransmitter GABA de novo synthesis. May also contributes to amino acid transport in placental trophoblasts. Also regulates synaptic plasticity. In Homo sapiens (Human), this protein is Sodium-coupled neutral amino acid symporter 1 (SLC38A1).